Consider the following 178-residue polypeptide: MSGGKYVDSEGHLYTVPVREQGNIYKPNNKAMAEEMNEKQVYDAHTKEIDLVNRDPKHLNDDVVKIDFEDVIAEPEGTHSFDGIWKASFTTFTVTKYWFYRLLSALFGIPMALIWGIYFAILSFLHIWAVVPCIKSFLIEIQCISRVYSIYVHTFCDPLFEAIGKIFSNIRINMQKEI.

S2 is subject to N-acetylserine. Phosphoserine is present on S2. The segment at 2-94 (SGGKYVDSEG…WKASFTTFTV (93 aa)) is required for homooligomerization. Residues 2–104 (SGGKYVDSEG…TKYWFYRLLS (103 aa)) are Cytoplasmic-facing. K5 carries the post-translational modification N6-acetyllysine; alternate. Residue K5 forms a Glycyl lysine isopeptide (Lys-Gly) (interchain with G-Cter in ubiquitin); alternate linkage. Phosphotyrosine is present on Y6. Phosphoserine is present on S9. Y14 is subject to Phosphotyrosine; by ABL1. At Y25 the chain carries Phosphotyrosine. Glycyl lysine isopeptide (Lys-Gly) (interchain with G-Cter in ubiquitin) cross-links involve residues K26, K30, K39, K47, and K57. Residues 82–94 (DGIWKASFTTFTV) are interaction with CAVIN3. The segment at residues 105–125 (ALFGIPMALIWGIYFAILSFL) is an intramembrane region (helical). Topologically, residues 126-178 (HIWAVVPCIKSFLIEIQCISRVYSIYVHTFCDPLFEAIGKIFSNIRINMQKEI) are cytoplasmic. Residues 131 to 142 (VPCIKSFLIEIQ) form an interacts with SPRY1, SPRY2, SPRY3 and SPRY4 region. S-palmitoyl cysteine attachment occurs at residues C133, C143, and C156. The tract at residues 149 to 160 (SIYVHTFCDPLF) is interacts with SPRY1, SPRY2, and SPRY4. The interval 167–178 (FSNIRINMQKEI) is interacts with SPRY1, SPRY2, SPRY3 and SPRY4.

This sequence belongs to the caveolin family. Homooligomer. Interacts with GLIPR2. Interacts with NOSTRIN. Interacts with SNAP25 and STX1A. Interacts (via the N-terminus) with DPP4; the interaction is direct. Interacts with CTNNB1, CDH1 and JUP. Interacts with PACSIN2; this interaction induces membrane tubulation. Interacts with SLC7A9. Interacts with BMX and BTK. Interacts with TGFBR1. Interacts with CAVIN3 (via leucine-zipper domain) in a cholesterol-sensitive manner. Interacts with CAVIN1. Interacts with EHD2 in a cholesterol-dependent manner. Forms a ternary complex with UBXN6 and VCP; mediates CAV1 targeting to lysosomes for degradation. Interacts with ABCG1; this interaction regulates ABCG1-mediated cholesterol efflux. Interacts with NEU3; this interaction enhances NEU3 sialidase activity within caveola. Interacts (via C-terminus) with SPRY1, SPRY2 (via C-terminus), SPRY3, and SPRY4. Interacts with IGFBP5; this interaction allows trafficking of IGFBP5 from the plasma membrane to the nucleus. Phosphorylated at Tyr-14 by ABL1 in response to oxidative stress. In terms of processing, ubiquitinated. Undergo monoubiquitination and multi- and/or polyubiquitination. Monoubiquitination of N-terminal lysines promotes integration in a ternary complex with UBXN6 and VCP which promotes oligomeric CAV1 targeting to lysosomes for degradation. Ubiquitinated by ZNRF1; leading to degradation and modulation of the TLR4-mediated immune response.

It is found in the golgi apparatus membrane. The protein localises to the cell membrane. It localises to the membrane. The protein resides in the caveola. Its subcellular location is the membrane raft. Its function is as follows. May act as a scaffolding protein within caveolar membranes. Forms a stable heterooligomeric complex with CAV2 that targets to lipid rafts and drives caveolae formation. Mediates the recruitment of CAVIN proteins (CAVIN1/2/3/4) to the caveolae. Interacts directly with G-protein alpha subunits and can functionally regulate their activity. Involved in the costimulatory signal essential for T-cell receptor (TCR)-mediated T-cell activation. Its binding to DPP4 induces T-cell proliferation and NF-kappa-B activation in a T-cell receptor/CD3-dependent manner. Recruits CTNNB1 to caveolar membranes and may regulate CTNNB1-mediated signaling through the Wnt pathway. Negatively regulates TGFB1-mediated activation of SMAD2/3 by mediating the internalization of TGFBR1 from membrane rafts leading to its subsequent degradation. Binds 20(S)-hydroxycholesterol (20(S)-OHC). The polypeptide is Caveolin-1 (CAV1) (Muntiacus reevesi (Reeves' muntjac)).